The sequence spans 446 residues: NADH oxidase (446 aa).

Residues 7–11 (GTNHA), D32, C42, V79, 109–112 (ATGS), K131, and Y158 contribute to the FAD site. The active-site Proton acceptor is H10. C42 serves as the catalytic Redox-active. C42 is modified (cysteine sulfinic acid (-SO2H)). NAD(+)-binding residues include I159, D178, Y187, and G244. D282 serves as a coordination point for FAD. A298 contributes to the NAD(+) binding site. FAD is bound by residues L299, A300, and S301. NAD(+) is bound at residue G329. F427 is an FAD binding site.

This sequence belongs to the class-III pyridine nucleotide-disulfide oxidoreductase family. As to quaternary structure, homodimer. The cofactor is FAD.

It carries out the reaction 2 NADH + O2 + 2 H(+) = 2 NAD(+) + 2 H2O. Inhibited by hydrogen peroxide, sulfhydryl reagents and quinine, but not by EDTA. Functionally, catalyzes the four-electron reduction of molecular oxygen to water. Active on beta-NADH, but not on alpha-NADH, beta-NADPH or alpha-NADPH. Under aerobic conditions, oxygen acts as the electron acceptor. Under anaerobic conditions, DCIP and MB can replace oxygen as the electron acceptor. The protein is NADH oxidase of Lactococcus lactis subsp. cremoris (strain MG1363).